We begin with the raw amino-acid sequence, 176 residues long: Protein FimF (176 aa).

The N-terminal stretch at 1-20 (MRNKPFYLLCAFLWLAVSHA) is a signal peptide. Cysteine 38 and cysteine 78 are oxidised to a cystine.

The protein belongs to the fimbrial protein family.

The protein localises to the fimbrium. Its function is as follows. Involved in regulation of length and mediation of adhesion of type 1 fimbriae (but not necessary for the production of fimbriae). Involved in the integration of FimH in the fimbriae. This Escherichia coli (strain K12) protein is Protein FimF (fimF).